The sequence spans 135 residues: Transcription antitermination protein NusB (135 aa).

Residues A115–S135 form a disordered region.

This sequence belongs to the NusB family.

In terms of biological role, involved in transcription antitermination. Required for transcription of ribosomal RNA (rRNA) genes. Binds specifically to the boxA antiterminator sequence of the ribosomal RNA (rrn) operons. The polypeptide is Transcription antitermination protein NusB (Frankia casuarinae (strain DSM 45818 / CECT 9043 / HFP020203 / CcI3)).